Reading from the N-terminus, the 28-residue chain is Chassatide C12 (28 aa).

The segment at residues 1 to 28 (EYCGESCYLIPCFTPGCYCVSRQCVNKN) is a cross-link (cyclopeptide (Glu-Asn)). 3 disulfides stabilise this stretch: Cys-3-Cys-17, Cys-7-Cys-19, and Cys-12-Cys-24.

Post-translationally, this is a cyclic peptide. Expressed in fruit, pedicel, leaf and stem but not in root (at protein level).

In terms of biological role, probably participates in a plant defense mechanism. The chain is Chassatide C12 from Chassalia chartacea (Chassalia curviflora).